The chain runs to 104 residues: Circadian clock oscillator protein KaiB (104 aa).

This sequence belongs to the KaiB family. The KaiABC complex composition changes during the circadian cycle to control KaiC phosphorylation. Complexes KaiC(6), KaiA(2-4):KaiC(6), KaiB(6):KaiC(6) and KaiC(6):KaiB(6):KaiA(12) are among the most important forms, many form cooperatively. Undergoes a major conformational rearrangment; in the free state forms homotetramers as a dimer of dimers. When bound to the CI domain of KaiC switches to a monomeric thioredoxin-fold (KaiB(fs)). KaiB(fs) binds CikA, leading it to dephosphorylate phospho-RpaA.

Functionally, key component of the KaiABC oscillator complex, which constitutes the main circadian regulator in cyanobacteria. Complex composition changes during the circadian cycle to control KaiC phosphorylation. KaiA stimulates KaiC autophosphorylation, while KaiB sequesters KaiA, leading to KaiC autodephosphorylation. Phospho-Ser-431 KaiC accumulation triggers binding of KaiB to form the KaiB(6):KaiC(6) complex, leading to changes in output regulators CikA and SasA. KaiB switches to a thioredoxin-like fold (KaiB(fs)) when bound to KaiC. KaiB(6):KaiC(6) formation exposes a site for KaiA binding that sequesters KaiA from KaiC, making the KaiC(6):KaiB(6):KaiA(12) complex that results in KaiC autodephosphorylation. A metamorphic protein which reversibly switches between an inactive tetrameric fold and a rare, thioredoxin-like monomeric fold (KaiB(fs)). KaiB(fs) binds phospho-KaiC, KaiA and CikA. KaiA and CikA compete for binding to KaiB(fs), and KaiB(fs) and SasA compete for binding to KaiC, thus the clock oscillator and output signal pathway are tightly coupled. The sequence is that of Circadian clock oscillator protein KaiB from Picosynechococcus sp. (strain ATCC 27264 / PCC 7002 / PR-6) (Agmenellum quadruplicatum).